The sequence spans 257 residues: Aspartate/glutamate leucyltransferase (257 aa).

Belongs to the R-transferase family. Bpt subfamily.

The protein resides in the cytoplasm. The enzyme catalyses N-terminal L-glutamyl-[protein] + L-leucyl-tRNA(Leu) = N-terminal L-leucyl-L-glutamyl-[protein] + tRNA(Leu) + H(+). It catalyses the reaction N-terminal L-aspartyl-[protein] + L-leucyl-tRNA(Leu) = N-terminal L-leucyl-L-aspartyl-[protein] + tRNA(Leu) + H(+). Functionally, functions in the N-end rule pathway of protein degradation where it conjugates Leu from its aminoacyl-tRNA to the N-termini of proteins containing an N-terminal aspartate or glutamate. The sequence is that of Aspartate/glutamate leucyltransferase from Rhodopseudomonas palustris (strain HaA2).